The sequence spans 37 residues: Cytochrome b6-f complex subunit 5 (37 aa).

Residues 5–25 form a helical membrane-spanning segment; sequence LLSGVVLGLILVTLSGLFFAA.

This sequence belongs to the PetG family. In terms of assembly, the 4 large subunits of the cytochrome b6-f complex are cytochrome b6, subunit IV (17 kDa polypeptide, PetD), cytochrome f and the Rieske protein, while the 4 small subunits are PetG, PetL, PetM and PetN. The complex functions as a dimer.

It localises to the cellular thylakoid membrane. Its function is as follows. Component of the cytochrome b6-f complex, which mediates electron transfer between photosystem II (PSII) and photosystem I (PSI), cyclic electron flow around PSI, and state transitions. PetG is required for either the stability or assembly of the cytochrome b6-f complex. The protein is Cytochrome b6-f complex subunit 5 of Trichodesmium erythraeum (strain IMS101).